The following is a 242-amino-acid chain: MSGHSKFANIKHKKEKNDAAKGKIFTMIGRELAVAVKEGGPDPANNFKLAQVVAKAKANNMPNDTIERGIKKAAGDGNSVNYETATYEGYGPSGTAIIVKCLTDNKNRTAANVRNAFTKGQGSIGTQGCVSYMFDEKGQIIIDKEECDMDADDLMMQALDAGAEDFADEDDSYEITTAPADFDAVRAALEEAGITMASAEVTMIPQTYVTLTDEADITNIGRILDLLDDDDDVQEVYHNWEE.

This sequence belongs to the TACO1 family.

The protein localises to the cytoplasm. This is Probable transcriptional regulatory protein EUBREC_1961 from Agathobacter rectalis (strain ATCC 33656 / DSM 3377 / JCM 17463 / KCTC 5835 / VPI 0990) (Eubacterium rectale).